Consider the following 90-residue polypeptide: Acylphosphatase (90 aa).

Residues 5–90 form the Acylphosphatase-like domain; that stretch reads SFVVRVWGLV…PPKGSGFHTN (86 aa). Active-site residues include Arg20 and Asn38.

It belongs to the acylphosphatase family.

The enzyme catalyses an acyl phosphate + H2O = a carboxylate + phosphate + H(+). The polypeptide is Acylphosphatase (acyP) (Aeromonas hydrophila subsp. hydrophila (strain ATCC 7966 / DSM 30187 / BCRC 13018 / CCUG 14551 / JCM 1027 / KCTC 2358 / NCIMB 9240 / NCTC 8049)).